Here is a 194-residue protein sequence, read N- to C-terminus: Yellow fluorescent protein (194 aa).

Lumazine-binding repeat units follow at residues 1–98 (MFKG…SGGH) and 99–194 (ILSA…NQCW). 179–183 (KVNVE) provides a ligand contact to FMN.

Homodimer. It depends on FMN as a cofactor.

Its function is as follows. Antenna protein that modulates the color of the bioluminescence emission of the luciferase. In the presence of YFP and only at temperatures below 20 degrees Celsius, luciferase exhibits a bimodal emission spectrum with a new peak at 545 nM (yellow), in addition to the one at 485 nM. This Aliivibrio fischeri (Vibrio fischeri) protein is Yellow fluorescent protein (luxY).